The following is a 543-amino-acid chain: GPI mannosyltransferase 4 (543 aa).

The next 5 helical transmembrane spans lie at 5–25 (TYLL…YLHP), 98–118 (VMFL…VPFA), 176–196 (LAFI…FLAI), 213–233 (PVSL…AVLV), and 353–373 (LFLA…GIYH). N-linked (GlcNAc...) asparagine glycosylation occurs at Asn-428.

The protein belongs to the glycosyltransferase 22 family. PIGZ subfamily.

It is found in the endoplasmic reticulum membrane. It functions in the pathway glycolipid biosynthesis; glycosylphosphatidylinositol-anchor biosynthesis. Its function is as follows. Alpha-1,2-mannosyltransferase involved in glycosylphosphatidylinositol-anchor biosynthesis. Transfers a fourth mannose to trimannosyl-GPIs during GPI precursor assembly. The presence of a fourth mannose in GPI is essential in fungi. This Aspergillus oryzae (strain ATCC 42149 / RIB 40) (Yellow koji mold) protein is GPI mannosyltransferase 4 (smp3).